A 394-amino-acid polypeptide reads, in one-letter code: Actin-related protein 2 (394 aa).

An N-acetylmethionine modification is found at methionine 1. Residues 160-162 (GDG) and 214-218 (RMIKE) contribute to the ATP site. Lysine 299 carries the post-translational modification N6-acetyllysine. 305 to 310 (GGSTMY) is a binding site for ATP. Lysine 322 is subject to N6-acetyllysine.

The protein belongs to the actin family. ARP2 subfamily. Component of the Arp2/3 complex composed of ACTR2/ARP2, ACTR3/ARP3, ARPC1B/p41-ARC, ARPC2/p34-ARC, ARPC3/p21-ARC, ARPC4/p20-ARC and ARPC5/p16-ARC.

It localises to the cytoplasm. It is found in the cytoskeleton. Its subcellular location is the cell projection. The protein localises to the nucleus. Functionally, ATP-binding component of the Arp2/3 complex, a multiprotein complex that mediates actin polymerization upon stimulation by nucleation-promoting factor (NPF). The Arp2/3 complex mediates the formation of branched actin networks in the cytoplasm, providing the force for cell motility. Seems to contact the pointed end of the daughter actin filament. In addition to its role in the cytoplasmic cytoskeleton, the Arp2/3 complex also promotes actin polymerization in the nucleus, thereby regulating gene transcription and repair of damaged DNA. The Arp2/3 complex promotes homologous recombination (HR) repair in response to DNA damage by promoting nuclear actin polymerization, leading to drive motility of double-strand breaks (DSBs). The sequence is that of Actin-related protein 2 (Actr2) from Rattus norvegicus (Rat).